Consider the following 309-residue polypeptide: DSC E3 ubiquitin ligase complex subunit C (309 aa).

N-linked (GlcNAc...) asparagine glycosylation is present at asparagine 61. 2 disordered regions span residues 88–110 and 148–177; these read LPPS…GKGK and EQAD…FDRL. Transmembrane regions (helical) follow at residues 257-277 and 289-309; these read DDML…AMWL and GLAV…RIMN.

It belongs to the dsc3 family. In terms of assembly, component of the DSC E3 ubiquitin ligase complex composed of dscA, dscB, dscC and dscD.

The protein resides in the endoplasmic reticulum membrane. The protein operates within protein modification; protein ubiquitination. Its function is as follows. Component of the DSC E3 ubiquitin ligase complex which is required for the srbA transcriptional activator proteolytic cleavage to release the soluble transcription factor from the membrane in low oxygen or sterol conditions. Required for growth during hypoxia and triazole drug susceptibility, as well as for virulence in a murine model of invasive pulmonary aspergillosis (IPA). This is DSC E3 ubiquitin ligase complex subunit C from Aspergillus fumigatus (strain CBS 144.89 / FGSC A1163 / CEA10) (Neosartorya fumigata).